The primary structure comprises 154 residues: MNCPFCSHNDSKVIDSRPTDEGQAIRRRRECISCSKRFTTYEKIDEIPLIVVKKNGNREPYNRNKILNGVIRSCEKRPVSMKDIENLVDGIEKQIHNTMEREITTELIGNLVIDKIKDLDGVAYVRFASVYREFKDINTFMDEVKKILSEKPSL.

The segment at 3-34 (CPFCSHNDSKVIDSRPTDEGQAIRRRRECISC) is a zinc-finger region. Residues 49–139 (LIVVKKNGNR…VYREFKDINT (91 aa)) form the ATP-cone domain.

The protein belongs to the NrdR family. Zn(2+) is required as a cofactor.

Functionally, negatively regulates transcription of bacterial ribonucleotide reductase nrd genes and operons by binding to NrdR-boxes. The sequence is that of Transcriptional repressor NrdR from Alkaliphilus oremlandii (strain OhILAs) (Clostridium oremlandii (strain OhILAs)).